A 353-amino-acid chain; its full sequence is ATPase GET3A (353 aa).

An ATP-binding site is contributed by 27–34 (KGGVGKTT). Aspartate 56 is an active-site residue. The ATP site is built by glutamate 226 and asparagine 253. Residues 320–353 (TTSRSNVEELERKVHTLRLQLKTAEEELERVKSG) are a coiled coil.

It belongs to the arsA ATPase family. As to quaternary structure, homodimer. Interacts with GET1 and GET4.

The protein localises to the cytoplasm. Its subcellular location is the cytosol. It is found in the endoplasmic reticulum. The enzyme catalyses ATP + H2O = ADP + phosphate + H(+). Its function is as follows. ATPase required for the post-translational delivery of tail-anchored (TA) proteins to the endoplasmic reticulum. Recognizes and selectively binds the transmembrane domain of TA proteins in the cytosol. This complex then targets to the endoplasmic reticulum by membrane-bound receptors, where the tail-anchored protein is released for insertion. This process is regulated by ATP binding and hydrolysis. ATP binding drives the homodimer towards the closed dimer state, facilitating recognition of newly synthesized TA membrane proteins. ATP hydrolysis is required for insertion. Subsequently, the homodimer reverts towards the open dimer state, lowering its affinity for the membrane-bound receptor, and returning it to the cytosol to initiate a new round of targeting. Involved in the control of root hair growth through the regulation of syntaxin SYP123 expression. In Arabidopsis thaliana (Mouse-ear cress), this protein is ATPase GET3A.